Reading from the N-terminus, the 1217-residue chain is DNA-directed RNA polymerase subunit beta' (1217 aa).

The Zn(2+) site is built by C60, C62, C75, and C78. Mg(2+) contacts are provided by D449, D451, and D453. C821, C895, C902, and C905 together coordinate Zn(2+).

This sequence belongs to the RNA polymerase beta' chain family. In terms of assembly, the RNAP catalytic core consists of 2 alpha, 1 beta, 1 beta' and 1 omega subunit. When a sigma factor is associated with the core the holoenzyme is formed, which can initiate transcription. It depends on Mg(2+) as a cofactor. Requires Zn(2+) as cofactor.

The enzyme catalyses RNA(n) + a ribonucleoside 5'-triphosphate = RNA(n+1) + diphosphate. In terms of biological role, DNA-dependent RNA polymerase catalyzes the transcription of DNA into RNA using the four ribonucleoside triphosphates as substrates. The sequence is that of DNA-directed RNA polymerase subunit beta' from Lactobacillus acidophilus (strain ATCC 700396 / NCK56 / N2 / NCFM).